A 210-amino-acid chain; its full sequence is CKLF-like MARVEL transmembrane domain-containing protein 2B (210 aa).

The next 4 membrane-spanning stretches (helical) occupy residues 35 to 55 (FWAQ…IAAM), 65 to 85 (PIVI…FFLY), 103 to 123 (LMND…ALEA), and 127 to 147 (LPVP…ISII). Residues 35–157 (FWAQGHAECK…DLCLQRRQFK (123 aa)) form the MARVEL domain.

Belongs to the chemokine-like factor family.

The protein localises to the membrane. This is CKLF-like MARVEL transmembrane domain-containing protein 2B (Cmtm2b) from Mus musculus (Mouse).